The primary structure comprises 381 residues: MWSEGRYDYDRLPRERVPPRSHPSDGYHRVVNVVPKRPPLLDKRPPLLDKRPPLLARPDEGGYSRYYSHVDCRVCDEGRSFSHDRRSGPSHSGDESGYRWLRDDHSTSRQPDYRDMRDGFRRKSFYSSHYSRDRSPHKRDAPFFRESPVGRKDSPHSRSGSSVSSRSYSPERSRTHSFHQSQHRKSSRVGASYKRQNEAIRGRGKERSIQSVKTSRDASPSSSSAVASSKALDKPSRLTEKELAEAESKWANETLEKSDESNLAEMNEFEAGSTAPLFIDQTEEPESNTVDGTELYEDSQLSNRSKAIASKTKEIEQVYRQDCETFGMVVKMLIEKDPSLEKSVQFALRQNLHEIGERCVEELKRFITEYDNSARDFGDPF.

Basic and acidic residues-rich tracts occupy residues 1 to 28 (MWSE…DGYH), 39 to 65 (PLLD…GYSR), and 79 to 121 (RSFS…DGFR). 2 disordered regions span residues 1-65 (MWSE…GYSR) and 79-260 (RSFS…KSDE). The Nuclear localization signal signature appears at 117–123 (RDGFRRK). Residue Lys-123 forms a Glycyl lysine isopeptide (Lys-Gly) (interchain with G-Cter in SUMO2) linkage. Phosphoserine occurs at positions 124, 128, 147, and 154. Over residues 130 to 156 (YSRDRSPHKRDAPFFRESPVGRKDSPH) the composition is skewed to basic and acidic residues. Low complexity predominate over residues 157–168 (SRSGSSVSSRSY). Residues 175 to 187 (THSFHQSQHRKSS) show a composition bias toward basic residues. At Ser-181 the chain carries Phosphoserine. Lys-194 is covalently cross-linked (Glycyl lysine isopeptide (Lys-Gly) (interchain with G-Cter in SUMO2)). Over residues 195 to 208 (RQNEAIRGRGKERS) the composition is skewed to basic and acidic residues. Ser-211 carries the phosphoserine modification. Lys-213 participates in a covalent cross-link: Glycyl lysine isopeptide (Lys-Gly) (interchain with G-Cter in SUMO2). Ser-215 and Ser-219 each carry phosphoserine. Low complexity predominate over residues 217 to 230 (DASPSSSSAVASSK). Residues 231 to 260 (ALDKPSRLTEKELAEAESKWANETLEKSDE) are compositionally biased toward basic and acidic residues. A Glycyl lysine isopeptide (Lys-Gly) (interchain with G-Cter in SUMO2) cross-link involves residue Lys-241. The residue at position 249 (Lys-249) is an N6-acetyllysine; alternate. A Glycyl lysine isopeptide (Lys-Gly) (interchain with G-Cter in SUMO2); alternate cross-link involves residue Lys-249. Phosphoserine is present on Ser-339. Lys-342 is covalently cross-linked (Glycyl lysine isopeptide (Lys-Gly) (interchain with G-Cter in SUMO2)).

In terms of assembly, homodimer. Component of the HUSH complex; at least composed of TASOR, PPHLN1 and MPHOSPH8. Interacts with SIN3A and HDAC1. May interact with PPL. Ubiquitously expressed. Strong expression in the developing somites and limbs, the embryonic nervous system and the adult brain.

Its subcellular location is the nucleus. It localises to the cytoplasm. The protein localises to the chromosome. Component of the HUSH complex, a multiprotein complex that mediates epigenetic repression. The HUSH complex is recruited to genomic loci rich in H3K9me3 and is probably required to maintain transcriptional silencing by promoting recruitment of SETDB1, a histone methyltransferase that mediates further deposition of H3K9me3. In the HUSH complex, contributes to the maintenance of the complex at chromatin. Acts as a transcriptional corepressor and regulates the cell cycle, probably via the HUSH complex. The HUSH complex is also involved in the silencing of unintegrated retroviral DNA: some part of the retroviral DNA formed immediately after infection remains unintegrated in the host genome and is transcriptionally repressed. May be involved in epithelial differentiation by contributing to epidermal integrity and barrier formation. The chain is Periphilin-1 from Mus musculus (Mouse).